The primary structure comprises 393 residues: Short-chain dehydrogenase/reductase family 42E member 1 (393 aa).

Tyrosine 152 (proton acceptor) is an active-site residue. Lysine 156 is a binding site for NAD(+). 2 helical membrane-spanning segments follow: residues 282-302 (LPLT…FILG) and 371-391 (GLLV…SVIL).

This sequence belongs to the 3-beta-HSD family.

It is found in the membrane. The chain is Short-chain dehydrogenase/reductase family 42E member 1 (SDR42E1) from Macaca fascicularis (Crab-eating macaque).